The following is a 311-amino-acid chain: GPN-loop GTPase 2 (311 aa).

Position 20-25 (Gly20–Thr25) interacts with GTP. A Gly-Pro-Asn (GPN)-loop; involved in dimer interface motif is present at residues Gly77 to Asn79. Ser179–Asp182 is a binding site for GTP.

Belongs to the GPN-loop GTPase family. As to quaternary structure, heterodimers with gpn1 or gpn3. Binds to RNA polymerase II (RNAPII).

Its function is as follows. Small GTPase required for proper localization of RNA polymerase II and III (RNAPII and RNAPIII). May act at an RNAP assembly step prior to nuclear import. This Danio rerio (Zebrafish) protein is GPN-loop GTPase 2.